We begin with the raw amino-acid sequence, 536 residues long: Pre-mRNA-splicing factor SLU7-B (536 aa).

Residues 1-42 (MATASVAFKSREDHRKKLELEEARKAGLAPAEVDEDGKEINP) form a disordered region. Positions 9-25 (KSREDHRKKLELEEARK) are enriched in basic and acidic residues. The segment at 96–109 (CINCGAMTHSSKAC) adopts a CCHC-type zinc-finger fold. Disordered stretches follow at residues 176–201 (LKKLEEKNNNENGDDATSDGEEDLDD) and 488–507 (KEDLSRREEKDERKRKYNVN). Residues 187–200 (NGDDATSDGEEDLD) show a composition bias toward acidic residues. At Ser193 the chain carries Phosphoserine. The short motif at 486–493 (LKKEDLSR) is the Nuclear localization signal element. Residues 488-501 (KEDLSRREEKDERK) are compositionally biased toward basic and acidic residues.

This sequence belongs to the SLU7 family. As to quaternary structure, interacts with PHYB in photobodies under red light.

Its subcellular location is the nucleus. Participates in the second catalytic step of pre-mRNA splicing, when the free hydroxyl group of exon I attacks the 3'-splice site to generate spliced mRNA and the excised lariat intron. Splicing factor acting as a negative regulator of seedling photomorphogenesis by antagonizing PHYB signaling to promote light-induced hypocotyl elongation. Prevents the accumulation of functionally spliced RVE8a form, a circadian clock regulator mediating the transcriptional activation of clock genes containing evening elements (EE), but promotes PIF4 expression to fine-tune hypocotyl elongation in the light. Together with SMP1, involved in the timing of cell cycle arrest during leaf development, in a STRUWWELPETER (SWP) dependent manner; promotes cell proliferation in developing organs. This chain is Pre-mRNA-splicing factor SLU7-B, found in Arabidopsis thaliana (Mouse-ear cress).